The primary structure comprises 512 residues: Probable amidase At4g34880 (512 aa).

Active-site charge relay system residues include K117 and S198. The Acyl-ester intermediate role is filled by S222.

Belongs to the amidase family. Expressed in vasculature of roots, cotyledons, leaves and sepals.

It catalyses the reaction a monocarboxylic acid amide + H2O = a monocarboxylate + NH4(+). The chain is Probable amidase At4g34880 from Arabidopsis thaliana (Mouse-ear cress).